Consider the following 251-residue polypeptide: NLP effector protein Pc129485 (251 aa).

An N-terminal signal peptide occupies residues 1–19 (MNFRIVLLVLVASLAGAQA). A Hepta-peptide GHRHDWE motif motif is present at residues 127-133 (GHRHNWE). N-linked (GlcNAc...) asparagine glycans are attached at residues Asn-146 and Asn-218.

Belongs to the Necrosis inducing protein (NPP1) family.

It is found in the secreted. Secreted effector that contributes strongly to virulence during infection by P.capsici. This chain is NLP effector protein Pc129485, found in Phytophthora capsici.